Consider the following 359-residue polypeptide: MSRVYNFCSGPAALPEAVLKKAQAELLDWHGAGVSVMEMSHRSSEFMSILASAKARLSRLMNISDDYEILFVQGGASTLFSQIPANLANGFESACFLDTGAWSSKAIKEAKKYTKVNVVGSSKAQNYTTVPDFSTLELDESAAYLHICPNETIGGLEFADLPETNLPIVADLSSTILSRKVDVSKYGVIYAGAQKNVGPAGVVICIIRKDLLARSSDDLPAIWNFAHLAENDSMINTPPTFAIYLADLVFEWLEAQGGVEAIEQINIRKAQALYDFIDSSNFYSNPVDPVYRSRMNVPFILADESLEALFLQESEAAGLRTLAGHRSVGGMRASIYNAMPMEGIEALIEFMRGFEERHG.

2 residues coordinate L-glutamate: Ser9 and Arg42. Pyridoxal 5'-phosphate is bound by residues 76–77 (AS), Trp102, Thr152, Asp171, and Gln194. An N6-(pyridoxal phosphate)lysine modification is found at Lys195. 236–237 (NT) contributes to the pyridoxal 5'-phosphate binding site.

It belongs to the class-V pyridoxal-phosphate-dependent aminotransferase family. SerC subfamily. Homodimer. Requires pyridoxal 5'-phosphate as cofactor.

It is found in the cytoplasm. It carries out the reaction O-phospho-L-serine + 2-oxoglutarate = 3-phosphooxypyruvate + L-glutamate. It catalyses the reaction 4-(phosphooxy)-L-threonine + 2-oxoglutarate = (R)-3-hydroxy-2-oxo-4-phosphooxybutanoate + L-glutamate. The protein operates within amino-acid biosynthesis; L-serine biosynthesis; L-serine from 3-phospho-D-glycerate: step 2/3. Its pathway is cofactor biosynthesis; pyridoxine 5'-phosphate biosynthesis; pyridoxine 5'-phosphate from D-erythrose 4-phosphate: step 3/5. Catalyzes the reversible conversion of 3-phosphohydroxypyruvate to phosphoserine and of 3-hydroxy-2-oxo-4-phosphonooxybutanoate to phosphohydroxythreonine. This is Phosphoserine aminotransferase from Marinomonas sp. (strain MWYL1).